A 444-amino-acid polypeptide reads, in one-letter code: sn-glycerol-3-phosphate-binding periplasmic protein UgpB (444 aa).

A signal peptide spans 1 to 30; that stretch reads MFNNTIRKTHAIRTAAACVAFALMSAGAQA. Sn-glycerol 3-phosphate is bound by residues tyrosine 72, glutamate 96, serine 151, serine 277, glycine 314, tyrosine 353, and arginine 404.

Belongs to the bacterial solute-binding protein 1 family. The complex is composed of two ATP-binding proteins (UgpC), two transmembrane proteins (UgpA and UgpE) and a solute-binding protein (UgpB).

It is found in the periplasm. Functionally, part of the ABC transporter complex UgpBAEC involved in sn-glycerol-3-phosphate (G3P) import. Binds G3P. The polypeptide is sn-glycerol-3-phosphate-binding periplasmic protein UgpB (ugpB) (Pectobacterium atrosepticum (strain SCRI 1043 / ATCC BAA-672) (Erwinia carotovora subsp. atroseptica)).